Here is a 164-residue protein sequence, read N- to C-terminus: Lipoprotein signal peptidase (164 aa).

4 helical membrane passes run 6-26 (LGVLAGIVALVLDQVTKLWLL), 39-59 (VLPFFDLVLAWNTGISYGWFS), 65-85 (GQILMLAFKAVAIVALAIWMA), and 88-108 (TTKLATIGLGLIIGGAIGNAI). Residues Asp118 and Asp140 contribute to the active site. Residues 141 to 161 (VAIVVGVAALLYDSLIGLPAA) traverse the membrane as a helical segment.

It belongs to the peptidase A8 family.

The protein resides in the cell inner membrane. The enzyme catalyses Release of signal peptides from bacterial membrane prolipoproteins. Hydrolyzes -Xaa-Yaa-Zaa-|-(S,diacylglyceryl)Cys-, in which Xaa is hydrophobic (preferably Leu), and Yaa (Ala or Ser) and Zaa (Gly or Ala) have small, neutral side chains.. The protein operates within protein modification; lipoprotein biosynthesis (signal peptide cleavage). In terms of biological role, this protein specifically catalyzes the removal of signal peptides from prolipoproteins. The sequence is that of Lipoprotein signal peptidase from Rhodopseudomonas palustris (strain ATCC BAA-98 / CGA009).